The following is an 821-amino-acid chain: G-type lectin S-receptor-like serine/threonine-protein kinase SD2-5 (821 aa).

Residues 1-21 (MRGVFIVIVTCLVFLPDPLRA) form the signal peptide. Residues 22 to 429 (GVASIGSITP…NGEDDGKHFP (408 aa)) lie on the Extracellular side of the membrane. The Bulb-type lectin domain occupies 33-148 (FGGSQMNYIN…DGTSIWESFD (116 aa)). 4 N-linked (GlcNAc...) asparagine glycosylation sites follow: N51, N121, N174, and N248. The EGF-like; atypical domain maps to 280–314 (PSDLCGTPEPCGPYYVCSGSKVCGCVSGLSRARSD). Disulfide bonds link C284–C296 and C290–C302. The PAN domain occupies 323–411 (CKKTKDNATL…SGFVSYIKIA (89 aa)). N-linked (GlcNAc...) asparagine glycans are attached at residues N329, N370, and N380. 2 cysteine pairs are disulfide-bonded: C363-C385 and C367-C373. A helical membrane pass occupies residues 430 to 450 (YVVIIVVVTVFIIAVLIFVAF). Residues 451–821 (RIHKRKKMIL…LSAVRLSGPR (371 aa)) are Cytoplasmic-facing. The Protein kinase domain maps to 493–768 (NNFSVKLGQG…KVVQMLEGVF (276 aa)). ATP contacts are provided by residues 499-507 (LGQGGFGSV) and K521. The tract at residues 581 to 599 (KDGDVLLDWDTRFNIALGT) is caM-binding. The active-site Proton acceptor is D618. S635 carries the post-translational modification Phosphoserine. Residue T652 is modified to Phosphothreonine.

It belongs to the protein kinase superfamily. Ser/Thr protein kinase family. As to quaternary structure, interacts with PUB9, PUB13, PUB14 and PUB29.

It localises to the membrane. The catalysed reaction is L-seryl-[protein] + ATP = O-phospho-L-seryl-[protein] + ADP + H(+). It carries out the reaction L-threonyl-[protein] + ATP = O-phospho-L-threonyl-[protein] + ADP + H(+). This chain is G-type lectin S-receptor-like serine/threonine-protein kinase SD2-5 (SD25), found in Arabidopsis thaliana (Mouse-ear cress).